Reading from the N-terminus, the 583-residue chain is Zinc finger protein 277 (583 aa).

2 consecutive C2H2-type zinc fingers follow at residues 351–375 (LQCLYCEKTFRDKNTLKDHMRKKQH) and 482–508 (HQCKCYSCHVKFKSKADLRTHMEDTKH).

It belongs to the ZNF277 family. As to quaternary structure, interacts (via zinc-finger domains) with RPS2/40S ribosomal protein S2, perhaps as nascent RPS2 is synthesized during translation; the interaction is direct; the interaction is extra-ribosomal. Interaction with RPS2 competes with the binding of RPS2 to protein arginine methyltransferase PRMT3. Interacts with Polycomb group (PcG) complex protein BMI1. May be part of a complex including at least ZNF277, BMI1 and RNF2/RING2.

The protein localises to the nucleus. The protein resides in the cytoplasm. Its subcellular location is the nucleolus. It is found in the chromosome. In terms of biological role, probable transcription factor. Involved in modulation of cellular senescence; represses transcription of the tumor suppressor gene INK4A/ARF, perhaps acting via the Polycomb group (PcG) complex PRC1. The protein is Zinc finger protein 277 of Mus musculus (Mouse).